A 103-amino-acid chain; its full sequence is MYAVLATGGKQYRVQEGDVIYVEKLNADVDSTVELNEVLAVGTEEGIKVGAPVVEGAKVVAKVAAQGKAKKVVVFKYKSKKDYRRKNGHRQPYTKLVIEKIEA.

It belongs to the bacterial ribosomal protein bL21 family. Part of the 50S ribosomal subunit. Contacts protein L20.

In terms of biological role, this protein binds to 23S rRNA in the presence of protein L20. The polypeptide is Large ribosomal subunit protein bL21 (Clostridium beijerinckii (strain ATCC 51743 / NCIMB 8052) (Clostridium acetobutylicum)).